We begin with the raw amino-acid sequence, 189 residues long: Inosine triphosphate pyrophosphatase (189 aa).

8–13 (TGNANK) serves as a coordination point for ITP. Residue E39 participates in Mg(2+) binding. ITP-binding positions include K51, 67 to 68 (DT), K84, 143 to 146 (FGWD), K167, and 172 to 173 (HR).

It belongs to the HAM1 NTPase family. As to quaternary structure, homodimer. Requires Mg(2+) as cofactor. It depends on Mn(2+) as a cofactor.

The protein resides in the cytoplasm. It is found in the nucleus. It catalyses the reaction ITP + H2O = IMP + diphosphate + H(+). The enzyme catalyses dITP + H2O = dIMP + diphosphate + H(+). It carries out the reaction XTP + H2O = XMP + diphosphate + H(+). Pyrophosphatase that hydrolyzes non-canonical purine nucleotides such as inosine triphosphate (ITP), deoxyinosine triphosphate (dITP) or xanthosine 5'-triphosphate (XTP) to their respective monophosphate derivatives. The enzyme does not distinguish between the deoxy- and ribose forms. Probably excludes non-canonical purines from RNA and DNA precursor pools, thus preventing their incorporation into RNA and DNA and avoiding chromosomal lesions. In Cryptococcus neoformans var. neoformans serotype D (strain JEC21 / ATCC MYA-565) (Filobasidiella neoformans), this protein is Inosine triphosphate pyrophosphatase.